Here is a 271-residue protein sequence, read N- to C-terminus: Interleukin-1 alpha (271 aa).

Residues 1-112 (MAKVPDMFED…DSEEEIIKPR (112 aa)) constitute a propeptide that is removed on maturation. The residue at position 82 (Lys82) is an N6-acetyllysine. The tract at residues 82 to 86 (KKRRL) is nuclear localization signal (NLS). Residue Ser87 is modified to Phosphoserine. Asn102 and Asn141 each carry an N-linked (GlcNAc...) asparagine glycan.

Belongs to the IL-1 family. Monomer. Interacts with TMED10; the interaction mediates the translocation from the cytoplasm into the ERGIC (endoplasmic reticulum-Golgi intermediate compartment) and thereby secretion. Interacts with IL1R1. Interacts with S100A13; this interaction is the first step in the export of IL1A, followed by direct translocation of this complex across the plasma membrane. Acetylated within its nuclear localization sequence, which impacts subcellular localization. Post-translationally, proteolytic processed by CAPN1 in a calcium-dependent manner. Cleavage from 31 kDa precursor to 18 kDa biologically active molecules. In terms of processing, phosphorylated. Phosphorylation greatly enhances susceptibility to digestion and promotes the conversion of pre-IL1A alpha to the biologically active IL1A.

It is found in the nucleus. It localises to the cytoplasm. The protein resides in the secreted. Its function is as follows. Cytokine constitutively present intracellularly in nearly all resting non-hematopoietic cells that plays an important role in inflammation and bridges the innate and adaptive immune systems. After binding to its receptor IL1R1 together with its accessory protein IL1RAP, forms the high affinity interleukin-1 receptor complex. Signaling involves the recruitment of adapter molecules such as MYD88, IRAK1 or IRAK4. In turn, mediates the activation of NF-kappa-B and the three MAPK pathways p38, p42/p44 and JNK pathways. Within the cell, acts as an alarmin and cell death results in its liberation in the extracellular space after disruption of the cell membrane to induce inflammation and alert the host to injury or damage. In addition to its role as a danger signal, which occurs when the cytokine is passively released by cell necrosis, directly senses DNA damage and acts as signal for genotoxic stress without loss of cell integrity. This is Interleukin-1 alpha (IL1A) from Cercocebus atys (Sooty mangabey).